The following is a 100-amino-acid chain: Urease subunit gamma (100 aa).

This sequence belongs to the urease gamma subunit family. As to quaternary structure, heterotrimer of UreA (gamma), UreB (beta) and UreC (alpha) subunits. Three heterotrimers associate to form the active enzyme.

The protein resides in the cytoplasm. It catalyses the reaction urea + 2 H2O + H(+) = hydrogencarbonate + 2 NH4(+). It functions in the pathway nitrogen metabolism; urea degradation; CO(2) and NH(3) from urea (urease route): step 1/1. The protein is Urease subunit gamma of Mycolicibacterium gilvum (strain PYR-GCK) (Mycobacterium gilvum (strain PYR-GCK)).